We begin with the raw amino-acid sequence, 633 residues long: Electron transfer flavoprotein-ubiquinone oxidoreductase, mitochondrial (633 aa).

The transit peptide at 1-90 (MHRFLVKLSS…NGITSSRCIS (90 aa)) directs the protein to the mitochondrion. 102-116 (VLIVGAGPAGLSAAI) lines the FAD pocket. The stretch at 140-161 (VGGHIISGNVFEPLALDELLPH) is an intramembrane region. Positions 334 and 335 each coordinate a ubiquinone. Residues 401 to 421 (IPYPVFPGGAIIGCSAGFLNV) lie within the membrane without spanning it. Cys-578, Cys-602, Cys-605, and Cys-608 together coordinate [4Fe-4S] cluster. The 4Fe-4S ferredoxin-type domain occupies 593 to 622 (PKLQINAQNCLHCKACDIKDPKQNIEWTVP).

It belongs to the ETF-QO/FixC family. [4Fe-4S] cluster serves as cofactor. Requires FAD as cofactor.

The protein localises to the mitochondrion inner membrane. The enzyme catalyses a ubiquinone + reduced [electron-transfer flavoprotein] = a ubiquinol + oxidized [electron-transfer flavoprotein] + H(+). Up-regulated by KIN10, by S1-bZIP specific dimers, and also by C/S1 bZIP heterodimers. Functionally, accepts electrons from ETF and reduces ubiquinone. May act downstream of IVD and D2HGDH in the degradation of phytol or chlorophyll during dark-induced senescence and sugar starvation. In Arabidopsis thaliana (Mouse-ear cress), this protein is Electron transfer flavoprotein-ubiquinone oxidoreductase, mitochondrial (ETFQO).